Here is a 364-residue protein sequence, read N- to C-terminus: Long-wave-sensitive opsin 1 (364 aa).

The Extracellular portion of the chain corresponds to 1–52 (MAHTWGPQRLAGGQPQANFEESTQGSIFTYTNSNSTRDPFEGPNYHIAPRWV). Ser22 carries O-linked (GlcNAc) serine glycosylation. N-linked (GlcNAc...) asparagine glycosylation is present at Asn34. Residues 53–77 (YHLTSAWMVFVVIASVFTNGLVLAA) traverse the membrane as a helical segment. The Cytoplasmic portion of the chain corresponds to 78–89 (TMRFKKLRHPLN). A helical membrane pass occupies residues 90 to 115 (WILVNLAIADLAETIIASTISVVNQM). Over 116 to 129 (YGYFVLGHPLCVVE) the chain is Extracellular. Cys126 and Cys203 form a disulfide bridge. Residues 130 to 149 (GYTVSLCGITGLWSLAIISW) traverse the membrane as a helical segment. Topologically, residues 150–168 (ERWMVVCKPFGNVRFDAKL) are cytoplasmic. Residues 169 to 192 (ATAGIAFSWIWAAVWTAPPIFGWS) traverse the membrane as a helical segment. Topologically, residues 193-218 (RYWPHGLKTSCGPDVFSGSSYPGVQS) are extracellular. A helical membrane pass occupies residues 219–246 (YMIVLMITCCFIPLSVIILCYLQVWLAI). Topologically, residues 247–268 (RAVAKQQKESESTQKAEKEVTR) are cytoplasmic. A helical membrane pass occupies residues 269–292 (MVMVMIFAYCLCWGPYTFFACFAA). Topologically, residues 293–300 (AHPGYAFH) are extracellular. The helical transmembrane segment at 301-325 (PLVAALPAYFAKSATIYNPIIYVFM) threads the bilayer. Lys312 bears the N6-(retinylidene)lysine mark. The Cytoplasmic portion of the chain corresponds to 326 to 364 (NRQFRNCILQLFGKKVDDSSELSSVSKTEASSVSSVSPA).

It belongs to the G-protein coupled receptor 1 family. Opsin subfamily. Post-translationally, phosphorylated on some or all of the serine and threonine residues present in the C-terminal region. In terms of tissue distribution, the three color pigments are found in the cone photoreceptor cells.

The protein localises to the membrane. Functionally, visual pigments are the light-absorbing molecules that mediate vision. They consist of an apoprotein, opsin, covalently linked to cis-retinal. In Capra hircus (Goat), this protein is Long-wave-sensitive opsin 1 (OPN1LW).